The primary structure comprises 232 residues: Ribonuclease 3 (232 aa).

Residues 5 to 134 form the RNase III domain; the sequence is QTVLKNHFEI…FLGALLLDKD (130 aa). Glu47 contacts Mg(2+). Asp51 is an active-site residue. Positions 120 and 123 each coordinate Mg(2+). Glu123 is a catalytic residue. The DRBM domain occupies 160-229; that stretch reads DYKTHLQELL…AKNAVEKGLD (70 aa).

It belongs to the ribonuclease III family. In terms of assembly, homodimer. Mg(2+) serves as cofactor.

The protein localises to the cytoplasm. The catalysed reaction is Endonucleolytic cleavage to 5'-phosphomonoester.. Its function is as follows. Digests double-stranded RNA. Involved in the processing of primary rRNA transcript to yield the immediate precursors to the large and small rRNAs (23S and 16S). Processes some mRNAs, and tRNAs when they are encoded in the rRNA operon. Processes pre-crRNA and tracrRNA of type II CRISPR loci if present in the organism. The polypeptide is Ribonuclease 3 (Streptococcus pneumoniae (strain ATCC BAA-255 / R6)).